The chain runs to 203 residues: Probable Tat proofreading chaperone DmsD (203 aa).

This sequence belongs to the TorD/DmsD family. DmsD subfamily.

In terms of biological role, required for biogenesis/assembly of DMSO reductase, but not for the interaction of the DmsA signal peptide with the Tat system. May be part of a chaperone cascade complex that facilitates a folding-maturation pathway for the substrate protein. The protein is Probable Tat proofreading chaperone DmsD of Haemophilus influenzae (strain ATCC 51907 / DSM 11121 / KW20 / Rd).